The following is a 302-amino-acid chain: Large ribosomal subunit protein bL28m (302 aa).

The protein belongs to the bacterial ribosomal protein bL28 family. In terms of assembly, component of the mitochondrial ribosome large subunit (39S) which comprises a 16S rRNA and about 50 distinct proteins.

It localises to the mitochondrion. In Drosophila melanogaster (Fruit fly), this protein is Large ribosomal subunit protein bL28m (mRpL28).